Consider the following 149-residue polypeptide: Protein E6 (149 aa).

2 zinc fingers span residues 30–66 and 103–139; these read CVECKKTLQRSEVYDFVFADLRIVYRDGNPFAVCKVC and CIICQRPLCPQEKKRHVDLNKRFHNISGRWTGRCAVC. Positions 147–149 match the PDZ-binding domain motif; sequence TQV.

This sequence belongs to the papillomaviridae E6 protein family. In terms of assembly, forms homodimers. Interacts with ubiquitin-protein ligase UBE3A/E6-AP and thus forms a complex with human TP53. Interacts with human NFX1 and MAGI3. Interacts with human IRF3; this interaction inhibits the establishment of antiviral state. Interacts with human TYK2; this interaction inhibits JAK-STAT activation by interferon alpha. Interacts with host DLG1; this interaction leads to the proteasomal degradation of DLG1.

It localises to the host cytoplasm. Its subcellular location is the host nucleus. Plays a major role in the induction and maintenance of cellular transformation. Acts mainly as an oncoprotein by stimulating the destruction of many host cell key regulatory proteins. E6 associates with host UBE3A/E6-AP ubiquitin-protein ligase, and inactivates tumor suppressors TP53 and TP73 by targeting them to the 26S proteasome for degradation. In turn, DNA damage and chromosomal instabilities increase and lead to cell proliferation and cancer development. The complex E6/E6AP targets several other substrates to degradation via the proteasome including host DLG1 or NFX1, a repressor of human telomerase reverse transcriptase (hTERT). The resulting increased expression of hTERT prevents the shortening of telomere length leading to cell immortalization. Other cellular targets including BAK1, Fas-associated death domain-containing protein (FADD) and procaspase 8, are degraded by E6/E6AP causing inhibition of apoptosis. E6 also inhibits immune response by interacting with host IRF3 and TYK2. These interactions prevent IRF3 transcriptional activities and inhibit TYK2-mediated JAK-STAT activation by interferon alpha resulting in inhibition of the interferon signaling pathway. In Human papillomavirus 58, this protein is Protein E6.